Here is a 256-residue protein sequence, read N- to C-terminus: UPF0246 protein Swoo_1284 (256 aa).

It belongs to the UPF0246 family.

In Shewanella woodyi (strain ATCC 51908 / MS32), this protein is UPF0246 protein Swoo_1284.